A 312-amino-acid polypeptide reads, in one-letter code: Bifunctional pinoresinol-lariciresinol reductase (312 aa).

Residues 10–16 (GGTGYLG), Arg-35, and Lys-44 contribute to the NADP(+) site. Residue Lys-139 is the Proton acceptor of the active site. Arg-143 contacts NADP(+). His-271 provides a ligand contact to substrate.

This sequence belongs to the NmrA-type oxidoreductase family. Isoflavone reductase subfamily. Dimer. As to expression, expressed in young stems, young roots and petioles. In stems, expressed in radial parenchyma cells and in the cambial cells of developing secondary xylem.

It carries out the reaction (+)-lariciresinol + NADP(+) = (+)-pinoresinol + NADPH + H(+). The enzyme catalyses (-)-secoisolariciresinol + NADP(+) = (+)-lariciresinol + NADPH + H(+). Its function is as follows. Reductase involved in lignan biosynthesis. Catalyzes the enantioselective sequential conversion of (+)-pinoresinol into (+)-lariciresinol and of (+)-lariciresinol into (-)-secoisolariciresinol. Abstracts the 4R-hydride from the NADPH cofactor during catalysis. This Forsythia intermedia (Border forsythia) protein is Bifunctional pinoresinol-lariciresinol reductase (PLR_Fi1).